Here is an 896-residue protein sequence, read N- to C-terminus: Protein translocase subunit SecA (896 aa).

ATP-binding positions include glutamine 87, 105 to 109 (GEGKT), and aspartate 512. The segment at 858–886 (RAGGEAEAAKPVVRDEKKVGRNDPCPCGS) is disordered. The span at 869–878 (VVRDEKKVGR) shows a compositional bias: basic and acidic residues. Zn(2+) contacts are provided by cysteine 882, cysteine 884, cysteine 893, and cysteine 894.

It belongs to the SecA family. Monomer and homodimer. Part of the essential Sec protein translocation apparatus which comprises SecA, SecYEG and auxiliary proteins SecDF-YajC and YidC. Zn(2+) is required as a cofactor.

Its subcellular location is the cell inner membrane. The protein resides in the cytoplasm. It carries out the reaction ATP + H2O + cellular proteinSide 1 = ADP + phosphate + cellular proteinSide 2.. In terms of biological role, part of the Sec protein translocase complex. Interacts with the SecYEG preprotein conducting channel. Has a central role in coupling the hydrolysis of ATP to the transfer of proteins into and across the cell membrane, serving as an ATP-driven molecular motor driving the stepwise translocation of polypeptide chains across the membrane. The chain is Protein translocase subunit SecA from Syntrophotalea carbinolica (strain DSM 2380 / NBRC 103641 / GraBd1) (Pelobacter carbinolicus).